The chain runs to 116 residues: Large ribosomal subunit protein bL20 (116 aa).

This sequence belongs to the bacterial ribosomal protein bL20 family.

Functionally, binds directly to 23S ribosomal RNA and is necessary for the in vitro assembly process of the 50S ribosomal subunit. It is not involved in the protein synthesizing functions of that subunit. This Mycoplasmopsis synoviae (strain 53) (Mycoplasma synoviae) protein is Large ribosomal subunit protein bL20.